Reading from the N-terminus, the 469-residue chain is Adenosylhomocysteinase (469 aa).

Threonine 63, aspartate 139, and glutamate 164 together coordinate substrate. Threonine 165–threonine 167 contacts NAD(+). Positions 194 and 198 each coordinate substrate. NAD(+) contacts are provided by residues asparagine 199, glycine 228 to glycine 233, glutamate 251, asparagine 300, isoleucine 321 to histidine 323, and asparagine 375.

It belongs to the adenosylhomocysteinase family. It depends on NAD(+) as a cofactor.

It localises to the cytoplasm. The catalysed reaction is S-adenosyl-L-homocysteine + H2O = L-homocysteine + adenosine. It functions in the pathway amino-acid biosynthesis; L-homocysteine biosynthesis; L-homocysteine from S-adenosyl-L-homocysteine: step 1/1. Functionally, may play a key role in the regulation of the intracellular concentration of adenosylhomocysteine. The chain is Adenosylhomocysteinase from Pseudomonas putida (strain W619).